The primary structure comprises 56 residues: Small ribosomal subunit protein uS14 (56 aa).

4 residues coordinate Zn(2+): cysteine 21, cysteine 24, cysteine 39, and cysteine 42.

Belongs to the universal ribosomal protein uS14 family. Zn(2+) serves as cofactor.

This is Small ribosomal subunit protein uS14 (RPS29) from Candida glabrata (strain ATCC 2001 / BCRC 20586 / JCM 3761 / NBRC 0622 / NRRL Y-65 / CBS 138) (Yeast).